A 184-amino-acid chain; its full sequence is ATP synthase subunit b, chloroplastic (184 aa).

A helical transmembrane segment spans residues 4–24 (IINLVIFSGYWPIAGNFGLNT).

It belongs to the ATPase B chain family. F-type ATPases have 2 components, F(1) - the catalytic core - and F(0) - the membrane proton channel. F(1) has five subunits: alpha(3), beta(3), gamma(1), delta(1), epsilon(1). F(0) has four main subunits: a(1), b(1), b'(1) and c(10-14). The alpha and beta chains form an alternating ring which encloses part of the gamma chain. F(1) is attached to F(0) by a central stalk formed by the gamma and epsilon chains, while a peripheral stalk is formed by the delta, b and b' chains.

The protein localises to the plastid. Its subcellular location is the chloroplast thylakoid membrane. F(1)F(0) ATP synthase produces ATP from ADP in the presence of a proton or sodium gradient. F-type ATPases consist of two structural domains, F(1) containing the extramembraneous catalytic core and F(0) containing the membrane proton channel, linked together by a central stalk and a peripheral stalk. During catalysis, ATP synthesis in the catalytic domain of F(1) is coupled via a rotary mechanism of the central stalk subunits to proton translocation. In terms of biological role, component of the F(0) channel, it forms part of the peripheral stalk, linking F(1) to F(0). The protein is ATP synthase subunit b, chloroplastic of Physcomitrium patens (Spreading-leaved earth moss).